Reading from the N-terminus, the 474-residue chain is 2-succinylbenzoate--CoA ligase (474 aa).

This sequence belongs to the ATP-dependent AMP-binding enzyme family. MenE subfamily.

It carries out the reaction 2-succinylbenzoate + ATP + CoA = 2-succinylbenzoyl-CoA + AMP + diphosphate. It functions in the pathway quinol/quinone metabolism; 1,4-dihydroxy-2-naphthoate biosynthesis; 1,4-dihydroxy-2-naphthoate from chorismate: step 5/7. Its pathway is quinol/quinone metabolism; menaquinone biosynthesis. Its function is as follows. Converts 2-succinylbenzoate (OSB) to 2-succinylbenzoyl-CoA (OSB-CoA). This chain is 2-succinylbenzoate--CoA ligase, found in Staphylococcus epidermidis (strain ATCC 12228 / FDA PCI 1200).